Reading from the N-terminus, the 156-residue chain is Deoxyuridine 5'-triphosphate nucleotidohydrolase (156 aa).

Substrate is bound by residues 74 to 76 (RSG), Asn87, 91 to 93 (TID), and Lys101.

This sequence belongs to the dUTPase family. The cofactor is Mg(2+).

It catalyses the reaction dUTP + H2O = dUMP + diphosphate + H(+). Its pathway is pyrimidine metabolism; dUMP biosynthesis; dUMP from dCTP (dUTP route): step 2/2. This enzyme is involved in nucleotide metabolism: it produces dUMP, the immediate precursor of thymidine nucleotides and it decreases the intracellular concentration of dUTP so that uracil cannot be incorporated into DNA. The protein is Deoxyuridine 5'-triphosphate nucleotidohydrolase of Wolbachia sp. subsp. Brugia malayi (strain TRS).